The sequence spans 330 residues: Major ferric iron-binding protein (330 aa).

The first 22 residues, 1 to 22 (MKTSIRYALLAAALTAATPALA), serve as a signal peptide directing secretion. The Fe cation site is built by H31, E79, Y217, and Y218.

This sequence belongs to the bacterial solute-binding protein 1 family.

The protein resides in the periplasm. In terms of biological role, this protein may be a central component in the iron-acquisition system. The protein is Major ferric iron-binding protein (fbp) of Neisseria gonorrhoeae.